A 290-amino-acid polypeptide reads, in one-letter code: Sodium/potassium-transporting ATPase subunit beta-2 (290 aa).

The Cytoplasmic segment spans residues 1–39; it reads MVIQKEKKSCGQVVEEWKEFVWNPRTHQFMGRTGTSWAF. The helical; Signal-anchor for type II membrane protein transmembrane segment at 40-67 threads the bilayer; it reads ILLFYLVFYGFLTAMFTLTMWVMLQTVS. Topologically, residues 68 to 290 are extracellular; sequence EHTPKYQDRL…VAFKLRINKT (223 aa). N-linked (GlcNAc...) asparagine glycosylation is found at Asn96 and Asn118. Cys129 and Cys150 are disulfide-bonded. Residues Asn153 and Asn159 are each glycosylated (N-linked (GlcNAc...) asparagine). The cysteines at positions 160 and 177 are disulfide-linked. N-linked (GlcNAc...) asparagine glycosylation is found at Asn193, Asn197, and Asn238. Residues 193 to 290 form an immunoglobulin-like region; sequence NQSMNVTCAG…VAFKLRINKT (98 aa). An intrachain disulfide couples Cys200 to Cys261.

The protein belongs to the X(+)/potassium ATPases subunit beta family. The sodium/potassium-transporting ATPase is composed of a catalytic alpha subunit, an auxiliary non-catalytic beta subunit and an additional regulatory subunit. Interacts with BSG.

Its subcellular location is the cell membrane. In terms of biological role, this is the non-catalytic component of the active enzyme, which catalyzes the hydrolysis of ATP coupled with the exchange of Na(+) and K(+) ions across the plasma membrane. The exact function of the beta-2 subunit is not known. Its function is as follows. Mediates cell adhesion of neurons and astrocytes, and promotes neurite outgrowth. The protein is Sodium/potassium-transporting ATPase subunit beta-2 (ATP1B2) of Oryctolagus cuniculus (Rabbit).